A 245-amino-acid polypeptide reads, in one-letter code: Probable phosphatase YcdX (245 aa).

Zn(2+)-binding residues include His7, His9, His15, His40, Glu73, His101, His131, Asp192, and His194.

It belongs to the PHP family. As to quaternary structure, homotrimer. It depends on Zn(2+) as a cofactor.

The chain is Probable phosphatase YcdX from Escherichia coli O81 (strain ED1a).